Here is a 312-residue protein sequence, read N- to C-terminus: Probable N-glycosylase/DNA lyase (312 aa).

The interval 1–22 is disordered; the sequence is MRIPVGDFDLEMTQRSGQTSQP. Over residues 13–22 the composition is skewed to polar residues; sequence TQRSGQTSQP. The active site involves K235.

Belongs to the type-1 OGG1 family.

It carries out the reaction 2'-deoxyribonucleotide-(2'-deoxyribose 5'-phosphate)-2'-deoxyribonucleotide-DNA = a 3'-end 2'-deoxyribonucleotide-(2,3-dehydro-2,3-deoxyribose 5'-phosphate)-DNA + a 5'-end 5'-phospho-2'-deoxyribonucleoside-DNA + H(+). Functionally, DNA repair enzyme that incises DNA at 8-oxoG residues. Excises 7,8-dihydro-8-oxoguanine and 2,6-diamino-4-hydroxy-5-N-methylformamidopyrimidine (FAPY) from damaged DNA. Has a beta-lyase activity that nicks DNA 3' to the lesion. The protein is Probable N-glycosylase/DNA lyase of Methanothermobacter thermautotrophicus (strain ATCC 29096 / DSM 1053 / JCM 10044 / NBRC 100330 / Delta H) (Methanobacterium thermoautotrophicum).